Here is a 136-residue protein sequence, read N- to C-terminus: MARTKRTAYKSTGGKVPRKQLVIEAAGKSAPSTSGMTKPHRYRPGTVALREIRPYQKSTHFLIRKLPFQRLVREIAQDFKTDLKFQSAAIRTLQEASEAYLVVFLESKQHSNLARMYSQNKSFPWLEGKRRQPQPM.

Arginine 3 carries the asymmetric dimethylarginine; by PRMT6; alternate modification. The residue at position 3 (arginine 3) is a Citrulline; alternate. Position 4 is a phosphothreonine; by HASPIN (threonine 4). Lysine 5 bears the Allysine; alternate mark. Position 5 is an N6,N6,N6-trimethyllysine; alternate (lysine 5). Residue lysine 5 is modified to N6,N6-dimethyllysine; alternate. At lysine 5 the chain carries N6-(2-hydroxyisobutyryl)lysine; alternate. Lysine 5 bears the N6-(beta-hydroxybutyryl)lysine; alternate mark. Lysine 5 is subject to N6-acetyllysine; alternate. Lysine 5 bears the N6-methyllysine; alternate mark. Phosphothreonine; by PKC is present on threonine 7. Position 10 is an N6,N6,N6-trimethyllysine; alternate (lysine 10). Residue lysine 10 is modified to N6,N6-dimethyllysine; alternate. Position 10 is an N6-(2-hydroxyisobutyryl)lysine; alternate (lysine 10). Lysine 10 carries the N6-acetyllysine; alternate modification. Lysine 10 carries the N6-methyllysine; alternate modification. The residue at position 11 (serine 11) is an ADP-ribosylserine; alternate. Serine 11 carries the post-translational modification Phosphoserine; alternate; by AURKB, AURKC, RPS6KA3, RPS6KA4 and RPS6KA5. Residue threonine 12 is modified to Phosphothreonine; by PKC. Position 15 is an N6-(2-hydroxyisobutyryl)lysine; alternate (lysine 15). Lysine 15 carries the post-translational modification N6-(beta-hydroxybutyryl)lysine; alternate. Lysine 15 carries the N6-acetyllysine; alternate modification. Lysine 15 carries the post-translational modification N6-glutaryllysine; alternate. Lysine 15 carries the N6-succinyllysine; alternate modification. Residue arginine 18 is modified to Citrulline; alternate. Arginine 18 carries the post-translational modification Asymmetric dimethylarginine; by CARM1; alternate. N6-(2-hydroxyisobutyryl)lysine; alternate is present on residues lysine 19 and lysine 28. Lysine 19 carries the N6-(beta-hydroxybutyryl)lysine; alternate modification. N6-acetyllysine; alternate is present on residues lysine 19 and lysine 28. N6-methyllysine; alternate is present on residues lysine 19 and lysine 28. 2 positions are modified to N6-glutaryllysine; alternate: lysine 19 and lysine 28. Residue lysine 19 is modified to N6-butyryllysine; alternate. Lysine 28 is modified (N6,N6,N6-trimethyllysine; alternate). Residue lysine 28 is modified to N6,N6-dimethyllysine; alternate. Residue serine 29 is modified to ADP-ribosylserine; alternate. Serine 29 is subject to Phosphoserine; alternate; by AURKB, AURKC and RPS6KA5. Serine 32 is modified (phosphoserine). Lysine 38 carries the post-translational modification N6-methyllysine. Position 42 is a phosphotyrosine (tyrosine 42). Lysine 57 bears the N6,N6,N6-trimethyllysine; alternate mark. N6-(2-hydroxyisobutyryl)lysine; alternate is present on lysine 57. Lysine 57 carries the N6-(beta-hydroxybutyryl)lysine; alternate modification. Lysine 57 is subject to N6-acetyllysine; alternate. Lysine 57 carries the N6-glutaryllysine; alternate modification. Lysine 57 carries the N6-succinyllysine; alternate modification. Lysine 57 carries the post-translational modification N6-methyllysine; by EHMT2; alternate. Serine 58 bears the Phosphoserine mark. 2 positions are modified to N6-(2-hydroxyisobutyryl)lysine; alternate: lysine 65 and lysine 80. 2 positions are modified to N6-methyllysine; alternate: lysine 65 and lysine 80. At lysine 80 the chain carries N6,N6,N6-trimethyllysine; alternate. N6,N6-dimethyllysine; alternate is present on lysine 80. At lysine 80 the chain carries N6-acetyllysine; alternate. An N6-glutaryllysine; alternate modification is found at lysine 80. Lysine 80 is modified (N6-succinyllysine; alternate). Residue threonine 81 is modified to Phosphothreonine. Serine 87 is subject to Phosphoserine.

Belongs to the histone H3 family. The nucleosome is a histone octamer containing two molecules each of H2A, H2B, H3 and H4 assembled in one H3-H4 heterotetramer and two H2A-H2B heterodimers. The octamer wraps approximately 147 bp of DNA. Post-translationally, acetylation is generally linked to gene activation. Acetylation on Lys-19 favors methylation at Arg-18. In terms of processing, citrullination at Arg-18 by PADI4 impairs methylation and represses transcription. Asymmetric dimethylation at Arg-18 (H3R17me2a) by CARM1 is linked to gene activation. Asymmetric dimethylation at Arg-3 (H3R2me2a) by PRMT6 is linked to gene repression and is mutually exclusive with H3 Lys-5 methylation (H3K4me2 and H3K4me3). H3R2me2a is present at the 3' of genes regardless of their transcription state and is enriched on inactive promoters, while it is absent on active promoters. Post-translationally, methylation at Lys-5 (H3K4me) and Lys-80 (H3K79me) are linked to gene activation. Methylation at Lys-5 (H3K4me) facilitates subsequent acetylation of H3 and H4. Methylation at Lys-80 (H3K79me) is associated with DNA double-strand break (DSB) responses and is a specific target for TP53BP1. Methylation at Lys-10 (H3K9me) and Lys-28 (H3K27me) are linked to gene repression. Methylation at Lys-10 (H3K9me) is a specific target for HP1 proteins (CBX1, CBX3 and CBX5) and prevents subsequent phosphorylation at Ser-11 (H3S10ph) and acetylation of H3 and H4. Methylation at Lys-5 (H3K4me) and Lys-80 (H3K79me) require preliminary monoubiquitination of H2B at 'Lys-120'. Methylation at Lys-10 (H3K9me) and Lys-28 (H3K27me) are enriched in inactive X chromosome chromatin. Monomethylation at Lys-57 (H3K56me1) by EHMT2/G9A in G1 phase promotes interaction with PCNA and is required for DNA replication. In terms of processing, phosphorylated at Thr-4 (H3T3ph) by HASPIN during prophase and dephosphorylated during anaphase. Phosphorylation at Ser-11 (H3S10ph) by AURKB is crucial for chromosome condensation and cell-cycle progression during mitosis and meiosis. In addition phosphorylation at Ser-11 (H3S10ph) by RPS6KA4 and RPS6KA5 is important during interphase because it enables the transcription of genes following external stimulation, like mitogens, stress, growth factors or UV irradiation and result in the activation of genes, such as c-fos and c-jun. Phosphorylation at Ser-11 (H3S10ph), which is linked to gene activation, prevents methylation at Lys-10 (H3K9me) but facilitates acetylation of H3 and H4. Phosphorylation at Ser-11 (H3S10ph) by AURKB mediates the dissociation of HP1 proteins (CBX1, CBX3 and CBX5) from heterochromatin. Phosphorylation at Ser-11 (H3S10ph) is also an essential regulatory mechanism for neoplastic cell transformation. Phosphorylated at Ser-29 (H3S28ph) by MAP3K20 isoform 1, RPS6KA5 or AURKB during mitosis or upon ultraviolet B irradiation. Phosphorylation at Thr-7 (H3T6ph) by PRKCB is a specific tag for epigenetic transcriptional activation that prevents demethylation of Lys-5 (H3K4me) by LSD1/KDM1A. At centromeres, specifically phosphorylated at Thr-12 (H3T11ph) from prophase to early anaphase, by DAPK3 and PKN1. Phosphorylation at Thr-12 (H3T11ph) by PKN1 or isoform M2 of PKM (PKM2) is a specific tag for epigenetic transcriptional activation that promotes demethylation of Lys-10 (H3K9me) by KDM4C/JMJD2C. Phosphorylation at Tyr-42 (H3Y41ph) by JAK2 promotes exclusion of CBX5 (HP1 alpha) from chromatin. Lysine deamination at Lys-5 (H3K4all) to form allysine is mediated by LOXL2. Allysine formation by LOXL2 only takes place on H3K4me3 and results in gene repression. Post-translationally, butyrylation of histones marks active promoters and competes with histone acetylation. It is present during late spermatogenesis. In terms of processing, succinylation at Lys-80 (H3K79succ) by KAT2A takes place with a maximum frequency around the transcription start sites of genes. It gives a specific tag for epigenetic transcription activation. Serine ADP-ribosylation constitutes the primary form of ADP-ribosylation of proteins in response to DNA damage. Serine ADP-ribosylation at Ser-11 (H3S10ADPr) is mutually exclusive with phosphorylation at Ser-11 (H3S10ph) and impairs acetylation at Lys-10 (H3K9ac).

Its subcellular location is the nucleus. It localises to the chromosome. Core component of nucleosome. Nucleosomes wrap and compact DNA into chromatin, limiting DNA accessibility to the cellular machineries which require DNA as a template. Histones thereby play a central role in transcription regulation, DNA repair, DNA replication and chromosomal stability. DNA accessibility is regulated via a complex set of post-translational modifications of histones, also called histone code, and nucleosome remodeling. This Bos taurus (Bovine) protein is Histone H3.3C-like.